The sequence spans 205 residues: MSRRHSAKYKIDRRVGENIWGRAKSPFNKRNYKPGQHGQNRRNKVSDFGMQLMAKQKLKAYYGDITEKQFAKTYVEAARMKGNSAENLIGLLESRLDAVVYRAKFVPTVFAARQFINHGHVMVNGRRCNIGSARLKPGDVVQVREKSRNLALVLEALGSPERDIPEYVEVDPKAMTATYKRVPALADVPYPVKMEPAQVVEFYSS.

One can recognise an S4 RNA-binding domain in the interval 94 to 157 (SRLDAVVYRA…RNLALVLEAL (64 aa)).

This sequence belongs to the universal ribosomal protein uS4 family. In terms of assembly, part of the 30S ribosomal subunit. Contacts protein S5. The interaction surface between S4 and S5 is involved in control of translational fidelity.

Functionally, one of the primary rRNA binding proteins, it binds directly to 16S rRNA where it nucleates assembly of the body of the 30S subunit. With S5 and S12 plays an important role in translational accuracy. This is Small ribosomal subunit protein uS4 from Hyphomonas neptunium (strain ATCC 15444).